Consider the following 137-residue polypeptide: Putative pre-16S rRNA nuclease (137 aa).

It belongs to the YqgF nuclease family.

Its subcellular location is the cytoplasm. Could be a nuclease involved in processing of the 5'-end of pre-16S rRNA. The chain is Putative pre-16S rRNA nuclease from Bacillus cereus (strain 03BB102).